The following is a 407-amino-acid chain: uncharacterized protein (407 aa).

Disordered stretches follow at residues 1 to 62 (MTGR…NGDP) and 350 to 379 (SVTP…KPSS). Positions 17 to 30 (PVEKMPRFQREHGA) are enriched in basic and acidic residues.

This is an uncharacterized protein from Ictaluridae (bullhead catfishes).